The following is a 263-amino-acid chain: MVISARAKIMLLETQNLAIGYEGKTLVQHIQFTLEENQICCLLGANGAGKSTFLKTLLGLQPPIGGDIVWQGKSLSDYSPTELARHIAYVPQAHSHLFPFLVQDMVMMGRSAFLKWYQTPKKSDLDLALMALQELEIAHLAQRYYHQLSGGEKQLVLIARAIAQQAKLLIMDEPTSSLDFGNQIRVLEKIKQLQKQNIALIISTHNPQQAAFLGDNIVLLDQQFGFQQGDKKHLLTLENLAKIYRTSPELLHQHLNNHIEKSL.

One can recognise an ABC transporter domain in the interval 12-247 (LETQNLAIGY…ENLAKIYRTS (236 aa)). 44 to 51 (GANGAGKS) is a binding site for ATP.

It belongs to the ABC transporter superfamily.

This is an uncharacterized protein from Haemophilus influenzae (strain ATCC 51907 / DSM 11121 / KW20 / Rd).